We begin with the raw amino-acid sequence, 244 residues long: MTDSHVPHPESPAVEEGEERPHRRIKSFVMRAGRMTEGQQRGLDQGLPLYGLSLTDAPVDFDQVFGRAAPRTLEIGFGMGHSLLEMAAAAPEHDFIGVEVHSPGVGALLNGVLTQGLTNVRVYDCDAIEVLNRCVADNSLDRLMLFFPDPWHKSRHHKRRIVQPEFAALVRSKLKVGGVFHMATDWGPYAEYMLEVMSVASGYRNQAEDNQYVPRPAERPITKFERRGEKLGHGVWDLKFEKVD.

The disordered stretch occupies residues methionine 1–arginine 24. Residues glutamate 74, glutamate 99, aspartate 126, and aspartate 149 each contribute to the S-adenosyl-L-methionine site. Residue aspartate 149 is part of the active site. Residues lysine 153, aspartate 185, and threonine 222–glutamate 225 each bind substrate.

The protein belongs to the class I-like SAM-binding methyltransferase superfamily. TrmB family.

It carries out the reaction guanosine(46) in tRNA + S-adenosyl-L-methionine = N(7)-methylguanosine(46) in tRNA + S-adenosyl-L-homocysteine. Its pathway is tRNA modification; N(7)-methylguanine-tRNA biosynthesis. In terms of biological role, catalyzes the formation of N(7)-methylguanine at position 46 (m7G46) in tRNA. The sequence is that of tRNA (guanine-N(7)-)-methyltransferase from Pseudomonas savastanoi pv. phaseolicola (strain 1448A / Race 6) (Pseudomonas syringae pv. phaseolicola (strain 1448A / Race 6)).